We begin with the raw amino-acid sequence, 257 residues long: 5'-nucleotidase SurE (257 aa).

A divalent metal cation is bound by residues Asp-8, Asp-9, Ser-40, and Asn-92.

It belongs to the SurE nucleotidase family. Requires a divalent metal cation as cofactor.

The protein resides in the cytoplasm. It catalyses the reaction a ribonucleoside 5'-phosphate + H2O = a ribonucleoside + phosphate. Functionally, nucleotidase that shows phosphatase activity on nucleoside 5'-monophosphates. This is 5'-nucleotidase SurE from Rhizobium etli (strain ATCC 51251 / DSM 11541 / JCM 21823 / NBRC 15573 / CFN 42).